The chain runs to 172 residues: MSSLEISSSCFNLETKLPLSPPLVEDSAFEPSRKDMDEVEEKSKDVINFTAEKLSVDEVSQLVISPLCGAISLFVGTTRNNFEGKKVISLEYEAYLPMAENEVRKICSDIRQKWPVKHIAVFHRLGHRAASLEAVSYAIDTLKAKVPIWKKEIYEESSSWKGNKECFWASNN.

Ser20 is subject to Phosphoserine. Substrate-binding positions include 127-128 (HR), Lys143, and 150-152 (KKE).

Belongs to the MoaE family. MOCS2B subfamily. As to quaternary structure, heterotetramer; composed of 2 small (MOCS2A) and 2 large (MOCS2B) subunits.

Its subcellular location is the cytoplasm. It localises to the cytosol. The enzyme catalyses 2 [molybdopterin-synthase sulfur-carrier protein]-C-terminal-Gly-aminoethanethioate + cyclic pyranopterin phosphate + H2O = molybdopterin + 2 [molybdopterin-synthase sulfur-carrier protein]-C-terminal Gly-Gly + 2 H(+). The protein operates within cofactor biosynthesis; molybdopterin biosynthesis. Its function is as follows. Catalytic subunit of the molybdopterin synthase complex, a complex that catalyzes the conversion of precursor Z into molybdopterin. Acts by mediating the incorporation of 2 sulfur atoms from thiocarboxylated MOCS2A into precursor Z to generate a dithiolene group. This chain is Molybdopterin synthase catalytic subunit, found in Pongo abelii (Sumatran orangutan).